The sequence spans 334 residues: tRNA dimethylallyltransferase (334 aa).

23 to 30 contributes to the ATP binding site; sequence GPTGAGKT. Position 25–30 (25–30) interacts with substrate; it reads TGAGKT. 2 interaction with substrate tRNA regions span residues 53-56 and 177-181; these read DSAL and QRVQR.

This sequence belongs to the IPP transferase family. In terms of assembly, monomer. The cofactor is Mg(2+).

The catalysed reaction is adenosine(37) in tRNA + dimethylallyl diphosphate = N(6)-dimethylallyladenosine(37) in tRNA + diphosphate. Functionally, catalyzes the transfer of a dimethylallyl group onto the adenine at position 37 in tRNAs that read codons beginning with uridine, leading to the formation of N6-(dimethylallyl)adenosine (i(6)A). This is tRNA dimethylallyltransferase from Polynucleobacter necessarius subsp. necessarius (strain STIR1).